The following is a 99-amino-acid chain: DNA-binding protein HU (99 aa).

A disordered region spans residues 67–86 (REGRNPKTGAKMKIDAYNQP).

It belongs to the bacterial histone-like protein family. As to quaternary structure, homodimer.

In terms of biological role, histone-like DNA-binding protein which is capable of wrapping DNA to stabilize it, and thus to prevent its denaturation under extreme environmental conditions. The sequence is that of DNA-binding protein HU (hup) from Rickettsia conorii (strain ATCC VR-613 / Malish 7).